The primary structure comprises 419 residues: UDP-N-acetylglucosamine 1-carboxyvinyltransferase 2 (419 aa).

Residue 24-25 (KN) coordinates phosphoenolpyruvate. Residue Arg-94 participates in UDP-N-acetyl-alpha-D-glucosamine binding. The active-site Proton donor is the Cys-118. Cys-118 is subject to 2-(S-cysteinyl)pyruvic acid O-phosphothioketal. UDP-N-acetyl-alpha-D-glucosamine-binding positions include 123–127 (RPIDQ), Asp-307, and Ile-329.

The protein belongs to the EPSP synthase family. MurA subfamily.

Its subcellular location is the cytoplasm. It catalyses the reaction phosphoenolpyruvate + UDP-N-acetyl-alpha-D-glucosamine = UDP-N-acetyl-3-O-(1-carboxyvinyl)-alpha-D-glucosamine + phosphate. It participates in cell wall biogenesis; peptidoglycan biosynthesis. Functionally, cell wall formation. Adds enolpyruvyl to UDP-N-acetylglucosamine. The sequence is that of UDP-N-acetylglucosamine 1-carboxyvinyltransferase 2 from Staphylococcus aureus (strain MRSA252).